Consider the following 382-residue polypeptide: Chorismate synthase (382 aa).

Arg39 and Arg45 together coordinate NADP(+). A disordered region spans residues 89 to 113 (SPEPGGEPRKKALTDARPGHADLTG). Positions 94-108 (GEPRKKALTDARPGH) are enriched in basic and acidic residues. FMN contacts are provided by residues 128–130 (RAS), 246–247 (QA), Ala290, 305–309 (KPIAT), and Arg331.

The protein belongs to the chorismate synthase family. In terms of assembly, homotetramer. It depends on FMNH2 as a cofactor.

It carries out the reaction 5-O-(1-carboxyvinyl)-3-phosphoshikimate = chorismate + phosphate. Its pathway is metabolic intermediate biosynthesis; chorismate biosynthesis; chorismate from D-erythrose 4-phosphate and phosphoenolpyruvate: step 7/7. Catalyzes the anti-1,4-elimination of the C-3 phosphate and the C-6 proR hydrogen from 5-enolpyruvylshikimate-3-phosphate (EPSP) to yield chorismate, which is the branch point compound that serves as the starting substrate for the three terminal pathways of aromatic amino acid biosynthesis. This reaction introduces a second double bond into the aromatic ring system. This chain is Chorismate synthase, found in Deinococcus radiodurans (strain ATCC 13939 / DSM 20539 / JCM 16871 / CCUG 27074 / LMG 4051 / NBRC 15346 / NCIMB 9279 / VKM B-1422 / R1).